Consider the following 310-residue polypeptide: Protoheme IX farnesyltransferase 2 (310 aa).

Helical transmembrane passes span 25–45 (PGII…AAKG), 49–69 (LVLM…GCAI), 98–118 (HVLL…ALFT), 121–141 (LALL…SLYM), 145–165 (SVYG…VGYC), 176–196 (VILL…IAIF), 222–242 (IVLY…AGYT), 245–265 (AFMA…LKGY), and 277–297 (QVFG…ALDF).

Belongs to the UbiA prenyltransferase family. Protoheme IX farnesyltransferase subfamily.

It localises to the cell inner membrane. It carries out the reaction heme b + (2E,6E)-farnesyl diphosphate + H2O = Fe(II)-heme o + diphosphate. Its pathway is porphyrin-containing compound metabolism; heme O biosynthesis; heme O from protoheme: step 1/1. In terms of biological role, converts heme B (protoheme IX) to heme O by substitution of the vinyl group on carbon 2 of heme B porphyrin ring with a hydroxyethyl farnesyl side group. In Shewanella sp. (strain ANA-3), this protein is Protoheme IX farnesyltransferase 2.